A 397-amino-acid chain; its full sequence is uncharacterized protein (397 aa).

The next 9 membrane-spanning stretches (helical) occupy residues 1–21 (MGASGLVWTLTIVLIAGLMLV), 39–59 (VIQSATFVGIAILFGIAVVVF), 76–96 (EALSVDNLFVFLVIISSFGVP), 103–123 (VLLFGIAFALVTRTGFIFVGA), 124–144 (ALIENFNSAFYLFGLVLLVMA), 194–214 (MMTPLLLVMIAVGGTDILFAF), 219–239 (ALFGLTQNVYLVFAATAFSLL), 255–275 (LVYLSYGLAVILGFIGVKLML), and 301–321 (QSLTVIIIVLLITTAASFWSA).

It belongs to the TerC family.

Its subcellular location is the cell membrane. This is an uncharacterized protein from Mycobacterium tuberculosis (strain CDC 1551 / Oshkosh).